The sequence spans 715 residues: DNA ligase (715 aa).

NAD(+)-binding positions include 47 to 51 (DADYD), 96 to 97 (SL), and E128. K130 functions as the N6-AMP-lysine intermediate in the catalytic mechanism. The NAD(+) site is built by R151, E188, K306, and K330. Zn(2+) contacts are provided by C435, C438, C453, and C459. The region spanning 637-715 (RRDTAVAGKT…EDEWLALIGN (79 aa)) is the BRCT domain.

This sequence belongs to the NAD-dependent DNA ligase family. LigA subfamily. The cofactor is Mg(2+). Requires Mn(2+) as cofactor.

It catalyses the reaction NAD(+) + (deoxyribonucleotide)n-3'-hydroxyl + 5'-phospho-(deoxyribonucleotide)m = (deoxyribonucleotide)n+m + AMP + beta-nicotinamide D-nucleotide.. Functionally, DNA ligase that catalyzes the formation of phosphodiester linkages between 5'-phosphoryl and 3'-hydroxyl groups in double-stranded DNA using NAD as a coenzyme and as the energy source for the reaction. It is essential for DNA replication and repair of damaged DNA. The sequence is that of DNA ligase from Rhodopseudomonas palustris (strain TIE-1).